A 1051-amino-acid polypeptide reads, in one-letter code: Ubiquitin-activating enzyme E1 1 (1051 aa).

Tandem repeats lie at residues 56–194 (GRET…GSVF) and 453–605 (GSKL…QMVI). The 2 approximate repeats stretch occupies residues 56–605 (GRETMKRLFG…GAKCNTQMVI (550 aa)). Residues Ala472, Asp498, Arg509, Lys522, and 570–571 (DN) contribute to the ATP site. Cys626 acts as the Glycyl thioester intermediate in catalysis.

Belongs to the ubiquitin-activating E1 family. In terms of assembly, monomer. The N-terminus is blocked.

The catalysed reaction is ATP + ubiquitin + [E1 ubiquitin-activating enzyme]-L-cysteine = AMP + diphosphate + S-ubiquitinyl-[E1 ubiquitin-activating enzyme]-L-cysteine.. Its pathway is protein modification; protein ubiquitination. Functionally, activates ubiquitin by first adenylating its C-terminal glycine residue with ATP, and thereafter linking this residue to the side chain of a cysteine residue in E1, yielding a ubiquitin-E1 thioester and free AMP. In Triticum aestivum (Wheat), this protein is Ubiquitin-activating enzyme E1 1.